The chain runs to 906 residues: Protein translocase subunit SecA (906 aa).

Residues glutamine 89, 107 to 111 (GEGKT), and aspartate 502 each bind ATP. Residues cysteine 885, cysteine 887, cysteine 896, and histidine 897 each coordinate Zn(2+).

This sequence belongs to the SecA family. As to quaternary structure, monomer and homodimer. Part of the essential Sec protein translocation apparatus which comprises SecA, SecYEG and auxiliary proteins SecDF-YajC and YidC. Zn(2+) serves as cofactor.

Its subcellular location is the cell inner membrane. It localises to the cytoplasm. The enzyme catalyses ATP + H2O + cellular proteinSide 1 = ADP + phosphate + cellular proteinSide 2.. Its function is as follows. Part of the Sec protein translocase complex. Interacts with the SecYEG preprotein conducting channel. Has a central role in coupling the hydrolysis of ATP to the transfer of proteins into and across the cell membrane, serving both as a receptor for the preprotein-SecB complex and as an ATP-driven molecular motor driving the stepwise translocation of polypeptide chains across the membrane. This is Protein translocase subunit SecA from Rhizobium rhizogenes (strain K84 / ATCC BAA-868) (Agrobacterium radiobacter).